The sequence spans 342 residues: MGLFTTRQLLGYTEQKVKFRALFLELFFRRTVNFHTEEVMLDKITGKTPVAAYVSPVVEGKVLRHRGGETRVLRPGYVKPKHEFNYQQAVERLPGEDPSQLNDPAYRRLRIITDNLKQEEHAIVQVEEMQAVNAVLYGKYTMEGDQFEKIEVDFGRSTKNNITQGSGKEWSKQDRDTFDPTHDIDLYCDLASGLVNIAIMDGTVWRLLNGFKLFREKLDTRRGSNSQLETAVKDLGAVVSFKGYYGDLAIVVAKTSYIAEDGIEKRYLPDGMLVLGNTAADGIRCYGAIQDAQALSEGVVASSRYPKHWLTVGDPAREFTMTQSAPLMVLPDPDEFVVVQVK.

It belongs to the lambda phage major capsid protein family.

This chain is P21 prophage-derived major head protein, found in Escherichia coli O6:H1 (strain CFT073 / ATCC 700928 / UPEC).